A 166-amino-acid chain; its full sequence is MKLMDNKNIKKLTLLAIWTALTFVLGRLFTFPIPGSAGNILTLLDVGIYTAVFLFGKREAAIIGGFAAFLLDLTAGFSNYMFFSLIIHGGQGYLAGLTRYKWLNFLLSLLVMVGGYFIVGGLMYGWGSAIAGLWVNIVQVIVGFVLAKVLSPLIERTGILNGFRKA.

The next 5 helical transmembrane spans lie at L14–P34, G35–F55, I62–F82, F105–G125, and W126–L146.

In E.coli forms a stable energy-coupling factor (ECF) transporter complex composed of 2 membrane-embedded substrate-binding protein (S component), 2 ATP-binding proteins (A and A' components) and 2 transmembrane proteins (T component), probably with a stoichiometry of 2:1:1:2. May be able to interact with more than 1 S component at a time.

The protein resides in the cell membrane. Functionally, probably a thiamine precursor-binding protein that interacts with the energy-coupling factor (ECF) ABC-transporter complex. Unlike classic ABC transporters this ECF transporter provides the energy necessary to transport a number of different substrates. The substrates themselves are bound by transmembrane, not extracytoplasmic soluble proteins. In Lactococcus lactis subsp. cremoris (strain MG1363), this protein is Thiamine precursor transporter HmpT (hmpT).